Here is a 307-residue protein sequence, read N- to C-terminus: Small ribosomal subunit biogenesis GTPase RsgA (307 aa).

Residues methionine 1–methionine 20 form a disordered region. Residues glycine 10–methionine 20 show a composition bias toward polar residues. In terms of domain architecture, CP-type G spans arginine 85 to phenylalanine 242. GTP-binding positions include asparagine 135–aspartate 138 and glycine 184–threonine 192. Zn(2+) contacts are provided by cysteine 266, cysteine 271, histidine 273, and cysteine 279.

The protein belongs to the TRAFAC class YlqF/YawG GTPase family. RsgA subfamily. Monomer. Associates with 30S ribosomal subunit, binds 16S rRNA. The cofactor is Zn(2+).

Its subcellular location is the cytoplasm. Its function is as follows. One of several proteins that assist in the late maturation steps of the functional core of the 30S ribosomal subunit. Helps release RbfA from mature subunits. May play a role in the assembly of ribosomal proteins into the subunit. Circularly permuted GTPase that catalyzes slow GTP hydrolysis, GTPase activity is stimulated by the 30S ribosomal subunit. This Neisseria meningitidis serogroup C / serotype 2a (strain ATCC 700532 / DSM 15464 / FAM18) protein is Small ribosomal subunit biogenesis GTPase RsgA.